A 138-amino-acid polypeptide reads, in one-letter code: Large-conductance mechanosensitive channel (138 aa).

The next 2 membrane-spanning stretches (helical) occupy residues 10 to 30 and 76 to 96; these read FAMR…AAFG and GSFI…FLAI.

The protein belongs to the MscL family. Homopentamer.

The protein localises to the cell inner membrane. In terms of biological role, channel that opens in response to stretch forces in the membrane lipid bilayer. May participate in the regulation of osmotic pressure changes within the cell. In Serratia proteamaculans (strain 568), this protein is Large-conductance mechanosensitive channel.